We begin with the raw amino-acid sequence, 205 residues long: Holliday junction branch migration complex subunit RuvA (205 aa).

The interval 1–64 (MIGRLKGILV…EDAQLLYGFI (64 aa)) is domain I. A domain II region spans residues 65-143 (HKEERSLFRL…SLMEASMGAE (79 aa)). The segment at 144–156 (REFVLKSNFTPAP) is flexible linker. The domain III stretch occupies residues 157–205 (VAATVEEDAIAALLSLGYKPQQASKAVSSAFQEGMDPEQLIKAALKSML).

This sequence belongs to the RuvA family. Homotetramer. Forms an RuvA(8)-RuvB(12)-Holliday junction (HJ) complex. HJ DNA is sandwiched between 2 RuvA tetramers; dsDNA enters through RuvA and exits via RuvB. An RuvB hexamer assembles on each DNA strand where it exits the tetramer. Each RuvB hexamer is contacted by two RuvA subunits (via domain III) on 2 adjacent RuvB subunits; this complex drives branch migration. In the full resolvosome a probable DNA-RuvA(4)-RuvB(12)-RuvC(2) complex forms which resolves the HJ.

It localises to the cytoplasm. The RuvA-RuvB-RuvC complex processes Holliday junction (HJ) DNA during genetic recombination and DNA repair, while the RuvA-RuvB complex plays an important role in the rescue of blocked DNA replication forks via replication fork reversal (RFR). RuvA specifically binds to HJ cruciform DNA, conferring on it an open structure. The RuvB hexamer acts as an ATP-dependent pump, pulling dsDNA into and through the RuvAB complex. HJ branch migration allows RuvC to scan DNA until it finds its consensus sequence, where it cleaves and resolves the cruciform DNA. In Shewanella amazonensis (strain ATCC BAA-1098 / SB2B), this protein is Holliday junction branch migration complex subunit RuvA.